Consider the following 476-residue polypeptide: Bifunctional protein HldE (476 aa).

Positions 1-319 (MKVSLPAFEK…EALALHHGES (319 aa)) are ribokinase. 195–198 (NMSE) provides a ligand contact to ATP. Residue Asp-264 is part of the active site. The interval 345 to 476 (MTNGCFDILH…AIIQNIMANQ (132 aa)) is cytidylyltransferase.

The protein in the N-terminal section; belongs to the carbohydrate kinase PfkB family. This sequence in the C-terminal section; belongs to the cytidylyltransferase family. Homodimer.

It catalyses the reaction D-glycero-beta-D-manno-heptose 7-phosphate + ATP = D-glycero-beta-D-manno-heptose 1,7-bisphosphate + ADP + H(+). The enzyme catalyses D-glycero-beta-D-manno-heptose 1-phosphate + ATP + H(+) = ADP-D-glycero-beta-D-manno-heptose + diphosphate. It participates in nucleotide-sugar biosynthesis; ADP-L-glycero-beta-D-manno-heptose biosynthesis; ADP-L-glycero-beta-D-manno-heptose from D-glycero-beta-D-manno-heptose 7-phosphate: step 1/4. Its pathway is nucleotide-sugar biosynthesis; ADP-L-glycero-beta-D-manno-heptose biosynthesis; ADP-L-glycero-beta-D-manno-heptose from D-glycero-beta-D-manno-heptose 7-phosphate: step 3/4. Its function is as follows. Catalyzes the phosphorylation of D-glycero-D-manno-heptose 7-phosphate at the C-1 position to selectively form D-glycero-beta-D-manno-heptose-1,7-bisphosphate. In terms of biological role, catalyzes the ADP transfer from ATP to D-glycero-beta-D-manno-heptose 1-phosphate, yielding ADP-D-glycero-beta-D-manno-heptose. This chain is Bifunctional protein HldE, found in Shewanella baltica (strain OS185).